The primary structure comprises 558 residues: Kelch-like protein 23 (558 aa).

Positions 36 to 104 (TDITLQCPSG…AYTSQIEITK (69 aa)) constitute a BTB domain. One can recognise a BACK domain in the interval 139-240 (CIGMHSFAEF…DPVYLKTALG (102 aa)). Kelch repeat units lie at residues 274-320 (TMYI…CLGP), 321-369 (NIYV…TLGG), 370-416 (CVYA…VLHD), 418-466 (IYVI…PFEN), 467-508 (KLYL…IMNG), and 510-557 (IYVT…CVYN).

This Homo sapiens (Human) protein is Kelch-like protein 23 (KLHL23).